A 360-amino-acid polypeptide reads, in one-letter code: Phospho-N-acetylmuramoyl-pentapeptide-transferase (360 aa).

Transmembrane regions (helical) follow at residues 21-41 (YITFRSIMALLTALIIGLWIG), 73-93 (TMGGIMILFAIGVSTLLWADL), 98-118 (VWFVLFILFGYGVVGFVDDYW), 132-152 (WKYFWLSVIALVSAFGMYAIG), 168-188 (VMPQLGLFYIVLTYFVIVGTS), 199-219 (GLAIVPLIMVAGAFALIAWAT), 236-256 (SGELVILCTAIVGAGLGFLWF), 263-283 (VFMGDVGSLSLGGALGVIAVL), 288-308 (LLLVVMGGVFVVEALSVILQV), and 338-358 (VIVRFWIITLMLVLIGLVTLK).

This sequence belongs to the glycosyltransferase 4 family. MraY subfamily. The cofactor is Mg(2+).

The protein localises to the cell inner membrane. It catalyses the reaction UDP-N-acetyl-alpha-D-muramoyl-L-alanyl-gamma-D-glutamyl-meso-2,6-diaminopimeloyl-D-alanyl-D-alanine + di-trans,octa-cis-undecaprenyl phosphate = di-trans,octa-cis-undecaprenyl diphospho-N-acetyl-alpha-D-muramoyl-L-alanyl-D-glutamyl-meso-2,6-diaminopimeloyl-D-alanyl-D-alanine + UMP. It functions in the pathway cell wall biogenesis; peptidoglycan biosynthesis. Catalyzes the initial step of the lipid cycle reactions in the biosynthesis of the cell wall peptidoglycan: transfers peptidoglycan precursor phospho-MurNAc-pentapeptide from UDP-MurNAc-pentapeptide onto the lipid carrier undecaprenyl phosphate, yielding undecaprenyl-pyrophosphoryl-MurNAc-pentapeptide, known as lipid I. The protein is Phospho-N-acetylmuramoyl-pentapeptide-transferase of Glaesserella parasuis serovar 5 (strain SH0165) (Haemophilus parasuis).